A 403-amino-acid chain; its full sequence is 8-amino-7-oxononanoate synthase (403 aa).

Arg22 is a binding site for substrate. 109–110 is a binding site for pyridoxal 5'-phosphate; it reads GF. His134 lines the substrate pocket. Pyridoxal 5'-phosphate contacts are provided by Ser178, His206, and Thr232. N6-(pyridoxal phosphate)lysine is present on Lys235. Substrate is bound at residue Thr348. A disordered region spans residues 383 to 403; that stretch reads SNDSGSKPSIESSFELKKEAQ. Over residues 385–394 the composition is skewed to polar residues; that stretch reads DSGSKPSIES.

The protein belongs to the class-II pyridoxal-phosphate-dependent aminotransferase family. BioF subfamily. In terms of assembly, homodimer. The cofactor is pyridoxal 5'-phosphate.

The enzyme catalyses 6-carboxyhexanoyl-[ACP] + L-alanine + H(+) = (8S)-8-amino-7-oxononanoate + holo-[ACP] + CO2. The protein operates within cofactor biosynthesis; biotin biosynthesis. Catalyzes the decarboxylative condensation of pimeloyl-[acyl-carrier protein] and L-alanine to produce 8-amino-7-oxononanoate (AON), [acyl-carrier protein], and carbon dioxide. This Vibrio atlanticus (strain LGP32) (Vibrio splendidus (strain Mel32)) protein is 8-amino-7-oxononanoate synthase.